We begin with the raw amino-acid sequence, 195 residues long: Holliday junction branch migration complex subunit RuvA (195 aa).

The domain I stretch occupies residues 1-64 (MIASIRGIIQ…EDALTLYGFS (64 aa)). The domain II stretch occupies residues 65–142 (DPAQRNLFEQ…DLRQLSGTTP (78 aa)). The tract at residues 143–151 (GNVSTLDRE) is flexible linker. The interval 151 to 195 (ELTDILISLGYSATEAAAAIAALPGDAPPTLEERLRLALRYFGSA) is domain III.

The protein belongs to the RuvA family. As to quaternary structure, homotetramer. Forms an RuvA(8)-RuvB(12)-Holliday junction (HJ) complex. HJ DNA is sandwiched between 2 RuvA tetramers; dsDNA enters through RuvA and exits via RuvB. An RuvB hexamer assembles on each DNA strand where it exits the tetramer. Each RuvB hexamer is contacted by two RuvA subunits (via domain III) on 2 adjacent RuvB subunits; this complex drives branch migration. In the full resolvosome a probable DNA-RuvA(4)-RuvB(12)-RuvC(2) complex forms which resolves the HJ.

It is found in the cytoplasm. The RuvA-RuvB-RuvC complex processes Holliday junction (HJ) DNA during genetic recombination and DNA repair, while the RuvA-RuvB complex plays an important role in the rescue of blocked DNA replication forks via replication fork reversal (RFR). RuvA specifically binds to HJ cruciform DNA, conferring on it an open structure. The RuvB hexamer acts as an ATP-dependent pump, pulling dsDNA into and through the RuvAB complex. HJ branch migration allows RuvC to scan DNA until it finds its consensus sequence, where it cleaves and resolves the cruciform DNA. The chain is Holliday junction branch migration complex subunit RuvA from Chloroflexus aurantiacus (strain ATCC 29364 / DSM 637 / Y-400-fl).